A 319-amino-acid chain; its full sequence is ATP-dependent 6-phosphofructokinase (319 aa).

Glycine 11 is a binding site for ATP. 21-25 (RAVVR) is a binding site for ADP. ATP-binding positions include 72 to 73 (RC) and 102 to 105 (GDGS). Aspartate 103 contacts Mg(2+). 125-127 (TID) contributes to the substrate binding site. The active-site Proton acceptor is aspartate 127. Arginine 154 provides a ligand contact to ADP. Substrate contacts are provided by residues arginine 162 and 169–171 (MGR). Residues 185 to 187 (GAE), arginine 211, and 213 to 215 (KLH) contribute to the ADP site. Substrate contacts are provided by residues glutamate 222, arginine 243, and 249–252 (HIQR).

The protein belongs to the phosphofructokinase type A (PFKA) family. ATP-dependent PFK group I subfamily. Prokaryotic clade 'B1' sub-subfamily. In terms of assembly, homotetramer. The cofactor is Mg(2+).

Its subcellular location is the cytoplasm. The enzyme catalyses beta-D-fructose 6-phosphate + ATP = beta-D-fructose 1,6-bisphosphate + ADP + H(+). It participates in carbohydrate degradation; glycolysis; D-glyceraldehyde 3-phosphate and glycerone phosphate from D-glucose: step 3/4. Its activity is regulated as follows. Allosterically activated by ADP and other diphosphonucleosides, and allosterically inhibited by phosphoenolpyruvate. Its function is as follows. Catalyzes the phosphorylation of D-fructose 6-phosphate to fructose 1,6-bisphosphate by ATP, the first committing step of glycolysis. This chain is ATP-dependent 6-phosphofructokinase, found in Alkaliphilus metalliredigens (strain QYMF).